We begin with the raw amino-acid sequence, 70 residues long: MPEDNKAAAKVEPLRKARPCPECGKPSHREHYPFCSNRCREVDLSRWLTGAYAIPVADDETKAEYPDEEN.

Zn(2+)-binding residues include Cys-20, Cys-23, Cys-35, and Cys-39.

This sequence belongs to the DNA gyrase inhibitor YacG family. As to quaternary structure, interacts with GyrB. It depends on Zn(2+) as a cofactor.

Inhibits all the catalytic activities of DNA gyrase by preventing its interaction with DNA. Acts by binding directly to the C-terminal domain of GyrB, which probably disrupts DNA binding by the gyrase. This chain is DNA gyrase inhibitor YacG, found in Rhizobium leguminosarum bv. trifolii (strain WSM2304).